Reading from the N-terminus, the 92-residue chain is Putative regulatory protein CA_C1717 (92 aa).

It belongs to the RemA family.

In Clostridium acetobutylicum (strain ATCC 824 / DSM 792 / JCM 1419 / IAM 19013 / LMG 5710 / NBRC 13948 / NRRL B-527 / VKM B-1787 / 2291 / W), this protein is Putative regulatory protein CA_C1717.